The following is a 351-amino-acid chain: Protein-glutamate methylesterase/protein-glutamine glutaminase (351 aa).

One can recognise a Response regulatory domain in the interval 3 to 120 (KTLVVDDSAL…EISKIENELV (118 aa)). Aspartate 54 is subject to 4-aspartylphosphate. The CheB-type methylesterase domain occupies 160 to 347 (ILIGSSTGGP…EQIVRMIEVK (188 aa)). Residues serine 165, histidine 192, and aspartate 289 contribute to the active site.

This sequence belongs to the CheB family. Post-translationally, phosphorylated by CheA. Phosphorylation of the N-terminal regulatory domain activates the methylesterase activity.

It is found in the cytoplasm. The enzyme catalyses [protein]-L-glutamate 5-O-methyl ester + H2O = L-glutamyl-[protein] + methanol + H(+). It carries out the reaction L-glutaminyl-[protein] + H2O = L-glutamyl-[protein] + NH4(+). Its function is as follows. Involved in chemotaxis. Part of a chemotaxis signal transduction system that modulates chemotaxis in response to various stimuli. Catalyzes the demethylation of specific methylglutamate residues introduced into the chemoreceptors (methyl-accepting chemotaxis proteins or MCP) by CheR. Also mediates the irreversible deamidation of specific glutamine residues to glutamic acid. This is Protein-glutamate methylesterase/protein-glutamine glutaminase from Methanococcoides burtonii (strain DSM 6242 / NBRC 107633 / OCM 468 / ACE-M).